Consider the following 295-residue polypeptide: 4-hydroxybenzoate octaprenyltransferase (295 aa).

8 helical membrane passes run 28–48, 55–75, 103–123, 147–167, 175–195, 219–239, 241–261, and 275–295; these read PIGI…AADG, VLIF…INDF, WALF…TDPF, LPQL…FTAA, AWLI…YYAM, AIIL…GMRL, LGPY…WEFV, and FLHN…DYGI.

The protein belongs to the UbiA prenyltransferase family. Mg(2+) serves as cofactor.

The protein localises to the cell inner membrane. The enzyme catalyses all-trans-octaprenyl diphosphate + 4-hydroxybenzoate = 4-hydroxy-3-(all-trans-octaprenyl)benzoate + diphosphate. Its pathway is cofactor biosynthesis; ubiquinone biosynthesis. Functionally, catalyzes the prenylation of para-hydroxybenzoate (PHB) with an all-trans polyprenyl group. Mediates the second step in the final reaction sequence of ubiquinone-8 (UQ-8) biosynthesis, which is the condensation of the polyisoprenoid side chain with PHB, generating the first membrane-bound Q intermediate 3-octaprenyl-4-hydroxybenzoate. The chain is 4-hydroxybenzoate octaprenyltransferase from Azotobacter vinelandii (strain DJ / ATCC BAA-1303).